The sequence spans 384 residues: Urotensin-2 receptor (384 aa).

The Extracellular segment spans residues 1–54 (MALSPEPSSRFLVPATMGSAMPELPGAPNASLNSSLASPTEPNSLEDLVATGTI). N-linked (GlcNAc...) asparagine glycosylation is found at Asn29 and Asn33. Residues 55-77 (GVVLSAMGVVGMAGNVYTLTVMC) form a helical membrane-spanning segment. The Cytoplasmic segment spans residues 78–87 (RFLHTSASMY). Residues 88 to 113 (VYVINLALADLLYLLSIPFIVATYVT) traverse the membrane as a helical segment. At 114-124 (KRWHFGDVGCR) the chain is on the extracellular side. Residues Cys123 and Cys199 are joined by a disulfide bond. A helical membrane pass occupies residues 125–146 (VLFSLDFLTMHASIFTLTLMSR). Residues 147–167 (ERYAAVVRPLDTVQRSKGYRK) are Cytoplasmic-facing. Residues 168–186 (VLALGTWLLALLLALPMML) traverse the membrane as a helical segment. The Extracellular segment spans residues 187-209 (AIRLVRRGHKSLCLPAWGQRTHR). The chain crosses the membrane as a helical span at residues 210–232 (AYLTLLFGTSIVGPGVVIGLLYV). Residues 233 to 259 (RLARAYWLSQRSSFTQTRRLPNPRVLY) lie on the Cytoplasmic side of the membrane. A helical transmembrane segment spans residues 260-285 (LILGIVLLFWACFLPFWLWQLLAQYR). Topologically, residues 286–299 (GAPPLAPRSARIVN) are extracellular. The chain crosses the membrane as a helical span at residues 300–320 (YLTTCLTYGNSCVNPFLYTLL). The Cytoplasmic segment spans residues 321–384 (TKNYRDYRQR…SQAVPGSLCV (64 aa)).

This sequence belongs to the G-protein coupled receptor 1 family. Expressed in neural tissue, including sensory epithelia.

It is found in the cell membrane. In terms of biological role, high affinity receptor for urotensin-2 and urotensin-2B. The activity of this receptor is mediated by a G-protein that activate a phosphatidylinositol-calcium second messenger system. This is Urotensin-2 receptor (UTS2R) from Bos taurus (Bovine).